We begin with the raw amino-acid sequence, 520 residues long: Interferon lambda receptor 1 (520 aa).

An N-terminal signal peptide occupies residues 1-20; that stretch reads MAGPERWGPLLLCLLQAAPG. The Extracellular portion of the chain corresponds to 21-228; it reads RPRLAPPQNV…LLEVPEANWA (208 aa). Residues 26–126 enclose the Fibronectin type-III domain; sequence PPQNVTLLSQ…LDYLFEVEPA (101 aa). N29 and N36 each carry an N-linked (GlcNAc...) asparagine glycan. Intrachain disulfides connect C74–C82 and C86–C150. N-linked (GlcNAc...) asparagine glycosylation is found at N142 and N169. A disulfide bond links C195 and C217. Residues 229–249 traverse the membrane as a helical segment; sequence FLVLPSLLILLLVIAAGGVIW. Over 250-520 the chain is Cytoplasmic; the sequence is KTLMGNPWFQ…GRTLGHYMAR (271 aa). 2 disordered regions span residues 302–439 and 477–520; these read VRPT…FLEE and ESSP…YMAR. Acidic residues predominate over residues 323-336; that stretch reads AEDEEEEDEEDTED. Low complexity predominate over residues 380–392; it reads SSAWDSSDRSWAS. The segment covering 479–495 has biased composition (acidic residues); it reads SPEEEEEARESEIEDSD.

Belongs to the type II cytokine receptor family. Heterodimer with IL10RB. Ubiquitinated by FBXO45-containing E3 ligase leading to proteasomal degradation. In terms of tissue distribution, widely expressed.

The protein resides in the membrane. The IFNLR1/IL10RB dimer is a receptor for the cytokine ligands IFNL2 and IFNL3 and mediates their antiviral activity. The ligand/receptor complex stimulate the activation of the JAK/STAT signaling pathway leading to the expression of IFN-stimulated genes (ISG), which contribute to the antiviral state. Determines the cell type specificity of the lambda interferon action. Shows a more restricted pattern of expression in the epithelial tissues thereby limiting responses to lambda interferons primarily to epithelial cells of the respiratory, gastrointestinal, and reproductive tracts. Seems not to be essential for early virus-activated host defense in vaginal infection, but plays an important role in Toll-like receptor (TLR)-induced antiviral defense. Plays a significant role in the antiviral immune defense in the intestinal epithelium. This Homo sapiens (Human) protein is Interferon lambda receptor 1 (IFNLR1).